Here is a 381-residue protein sequence, read N- to C-terminus: Succinyl-diaminopimelate desuccinylase (381 aa).

Position 71 (His71) interacts with Zn(2+). The active site involves Asp73. Asp104 lines the Zn(2+) pocket. Glu138 acts as the Proton acceptor in catalysis. Glu139, Glu167, and His353 together coordinate Zn(2+).

The protein belongs to the peptidase M20A family. DapE subfamily. In terms of assembly, homodimer. Zn(2+) is required as a cofactor. Co(2+) serves as cofactor.

The catalysed reaction is N-succinyl-(2S,6S)-2,6-diaminopimelate + H2O = (2S,6S)-2,6-diaminopimelate + succinate. It participates in amino-acid biosynthesis; L-lysine biosynthesis via DAP pathway; LL-2,6-diaminopimelate from (S)-tetrahydrodipicolinate (succinylase route): step 3/3. Functionally, catalyzes the hydrolysis of N-succinyl-L,L-diaminopimelic acid (SDAP), forming succinate and LL-2,6-diaminopimelate (DAP), an intermediate involved in the bacterial biosynthesis of lysine and meso-diaminopimelic acid, an essential component of bacterial cell walls. This is Succinyl-diaminopimelate desuccinylase from Shewanella pealeana (strain ATCC 700345 / ANG-SQ1).